Here is a 180-residue protein sequence, read N- to C-terminus: NADH-quinone oxidoreductase subunit I (180 aa).

4Fe-4S ferredoxin-type domains follow at residues 48-80 (IVLTRDPDGDERCVACNLCAVACPVGCISLQKS) and 90-119 (EFFRINFSRCIFCGLCEEACPTTAIQLTPD). Residues C60, C63, C66, C70, C99, C102, C105, and C109 each contribute to the [4Fe-4S] cluster site. Residues 161-174 (KPKGDAENEAKPID) are compositionally biased toward basic and acidic residues. Residues 161-180 (KPKGDAENEAKPIDVKSLLP) form a disordered region.

Belongs to the complex I 23 kDa subunit family. As to quaternary structure, NDH-1 is composed of 14 different subunits. Subunits NuoA, H, J, K, L, M, N constitute the membrane sector of the complex. The cofactor is [4Fe-4S] cluster.

It localises to the cell inner membrane. It catalyses the reaction a quinone + NADH + 5 H(+)(in) = a quinol + NAD(+) + 4 H(+)(out). Functionally, NDH-1 shuttles electrons from NADH, via FMN and iron-sulfur (Fe-S) centers, to quinones in the respiratory chain. The immediate electron acceptor for the enzyme in this species is believed to be ubiquinone. Couples the redox reaction to proton translocation (for every two electrons transferred, four hydrogen ions are translocated across the cytoplasmic membrane), and thus conserves the redox energy in a proton gradient. This is NADH-quinone oxidoreductase subunit I from Aeromonas hydrophila subsp. hydrophila (strain ATCC 7966 / DSM 30187 / BCRC 13018 / CCUG 14551 / JCM 1027 / KCTC 2358 / NCIMB 9240 / NCTC 8049).